The chain runs to 261 residues: Undecaprenyl-diphosphatase (261 aa).

7 helical membrane passes run 38–58 (RSDF…TFVF), 75–95 (RDYV…GLAV), 106–126 (IQPI…AESV), 136–156 (VTWS…VFPG), 181–201 (FSFL…CFEL), 217–237 (VAFV…LGYI), and 241–261 (SFAP…TWLT).

The protein belongs to the UppP family.

The protein localises to the cell inner membrane. The catalysed reaction is di-trans,octa-cis-undecaprenyl diphosphate + H2O = di-trans,octa-cis-undecaprenyl phosphate + phosphate + H(+). Its function is as follows. Catalyzes the dephosphorylation of undecaprenyl diphosphate (UPP). Confers resistance to bacitracin. In Xylella fastidiosa (strain 9a5c), this protein is Undecaprenyl-diphosphatase.